The sequence spans 376 residues: MSNKSVLLIAGEPSGDLLGAHLAQSLKSLEPNLKLAGMGGKRMREAGVEVFINADKLAVVGLLEILRQFRDIRHAMQTLKRYFKKTPPDLVVFIDYPGFNLHMAKQAKKAGIKVLYYVSPQIWAWRYGRIKKIKKYVDHMAVLFDFEEKLYQKENVPVSFVGHPLANAPTPSLSRNEICKQFNLDPDKPIVALFPGSREQEINKLLPMMVQAGKLIQTQIPTVQFILPLALNLALDKIRPFLSPEIKVIQNDISHVLAIAHAAVAASGTVTLEIALQQVPLVIIYKVAPLTFWLGKKLIRLSFIGLCNLVSPEPVAVELLQQDATPQAIADEVFQLLNNHNYRQSIIGKLGHLRPQLDRGNAAQNVAKVVHNLIFS.

Belongs to the LpxB family.

It catalyses the reaction a lipid X + a UDP-2-N,3-O-bis[(3R)-3-hydroxyacyl]-alpha-D-glucosamine = a lipid A disaccharide + UDP + H(+). Its pathway is bacterial outer membrane biogenesis; LPS lipid A biosynthesis. Condensation of UDP-2,3-diacylglucosamine and 2,3-diacylglucosamine-1-phosphate to form lipid A disaccharide, a precursor of lipid A, a phosphorylated glycolipid that anchors the lipopolysaccharide to the outer membrane of the cell. In Coxiella burnetii (strain Dugway 5J108-111), this protein is Lipid-A-disaccharide synthase.